The sequence spans 137 residues: Large ribosomal subunit protein uL16 (137 aa).

Over residues 1-17 (MLQPKRTKFRKTHKGRN) the composition is skewed to basic residues. Residues 1-24 (MLQPKRTKFRKTHKGRNRGLANSG) form a disordered region.

The protein belongs to the universal ribosomal protein uL16 family. In terms of assembly, part of the 50S ribosomal subunit.

Functionally, binds 23S rRNA and is also seen to make contacts with the A and possibly P site tRNAs. The protein is Large ribosomal subunit protein uL16 of Aeromonas hydrophila subsp. hydrophila (strain ATCC 7966 / DSM 30187 / BCRC 13018 / CCUG 14551 / JCM 1027 / KCTC 2358 / NCIMB 9240 / NCTC 8049).